We begin with the raw amino-acid sequence, 352 residues long: Ferrochelatase (352 aa).

Fe cation is bound by residues H222 and E303.

This sequence belongs to the ferrochelatase family.

It localises to the cytoplasm. The enzyme catalyses heme b + 2 H(+) = protoporphyrin IX + Fe(2+). Its pathway is porphyrin-containing compound metabolism; protoheme biosynthesis; protoheme from protoporphyrin-IX: step 1/1. In terms of biological role, catalyzes the ferrous insertion into protoporphyrin IX. This Brucella abortus (strain S19) protein is Ferrochelatase.